Here is a 42-residue protein sequence, read N- to C-terminus: uncharacterized protein (42 aa).

The helical transmembrane segment at 15–35 (INVCLSFFFLFYFIFVLFFAA) threads the bilayer.

It is found in the membrane. This is an uncharacterized protein from Dictyostelium discoideum (Social amoeba).